A 611-amino-acid chain; its full sequence is Muscarinic acetylcholine receptor gar-3 (611 aa).

The Extracellular segment spans residues 1–67; it reads MQSSSLGNAD…LLGEEGRMVM (67 aa). N28 and N33 each carry an N-linked (GlcNAc...) asparagine glycan. The helical transmembrane segment at 68 to 88 threads the bilayer; sequence IVVIGAMFALVTSLGNLMVMV. The Cytoplasmic portion of the chain corresponds to 89-101; the sequence is SFKIDKQLQTISN. The chain crosses the membrane as a helical span at residues 102 to 122; sequence YFLFSLAVADIAIGVISIPMF. Residues 123–140 are Extracellular-facing; that stretch reads TYYTAIQKWDLGYTMCQF. An intrachain disulfide couples C138 to C218. Residues 141–161 traverse the membrane as a helical segment; sequence WLCIDYLMSNASVLNLLLISF. The Cytoplasmic segment spans residues 162–181; it reads DRYFSVTRPLSYRPRRTTKK. The chain crosses the membrane as a helical span at residues 182–202; sequence ALTMIACTYIISLILWPPWII. Over 203–227 the chain is Extracellular; sequence SWPYIEGKFTAEPGTCVVQFLQTNP. A helical transmembrane segment spans residues 228–248; sequence YVTVGTAVAAFYLPVTIMCIL. Residues 249 to 525 lie on the Cytoplasmic side of the membrane; sequence YTRVYWETQK…RKQESKAAKT (277 aa). 4 disordered regions span residues 299 to 364, 377 to 432, 446 to 477, and 500 to 519; these read RRSM…SSEA, SHFA…NNNS, SRPS…NSEI, and FSSQ…RKQE. Positions 307 to 317 are enriched in low complexity; that stretch reads SSTSIIKSSGS. A compositionally biased stretch (basic and acidic residues) spans 503–519; the sequence is QERKSEKEQRKNERKQE. The chain crosses the membrane as a helical span at residues 526 to 546; the sequence is LSAILCAFIATWTPYNLIVCW. Residues 547 to 557 lie on the Extracellular side of the membrane; it reads EAFFPNTVPNV. A helical membrane pass occupies residues 558–578; that stretch reads LWTFSYFLCYINSTINPLCYA. At 579 to 611 the chain is on the cytoplasmic side; sequence LCNARFRHTYMRILRCKFKAERPTMNQGYVRRN.

It belongs to the G-protein coupled receptor 1 family. Muscarinic acetylcholine receptor subfamily.

It is found in the cell membrane. Its function is as follows. The muscarinic acetylcholine receptor mediates various cellular responses, including inhibition of adenylate cyclase, breakdown of phosphoinositides and modulation of potassium channels through the action of G proteins. Primary transducing effect is Pi turnover. Enhances the release of the neurotransmitter acetlycholine in cholinergic motor neurons, which in turn positively feeds back to depolarize body wall muscles and allows for the maintenance of normal body posture and locomotion. This chain is Muscarinic acetylcholine receptor gar-3 (gar-3), found in Caenorhabditis elegans.